The sequence spans 998 residues: Beta-galactosidase (998 aa).

Glu-431 functions as the Proton donor in the catalytic mechanism. The Nucleophile role is filled by Glu-508.

It belongs to the glycosyl hydrolase 2 family.

It carries out the reaction Hydrolysis of terminal non-reducing beta-D-galactose residues in beta-D-galactosides.. The chain is Beta-galactosidase (lacZ) from Lactococcus lactis subsp. lactis (strain IL1403) (Streptococcus lactis).